The chain runs to 388 residues: Riboflavin biosynthesis protein RibBA (388 aa).

The interval 1–186 is DHBP synthase; it reads MEELREAFEE…MDDVWREFVK (186 aa). Residues 21 to 22, Asp26, 125 to 129, and Glu149 each bind D-ribulose 5-phosphate; these read RE and RKGHT. Residue Glu22 participates in Mg(2+) binding. His128 provides a ligand contact to Mg(2+). The GTP cyclohydrolase II stretch occupies residues 187 to 388; sequence RKLLMKKKAE…LEEIFREVNS (202 aa). 235–239 serves as a coordination point for GTP; it reads RIHSE. Zn(2+) contacts are provided by Cys240, Cys251, and Cys253. Residues Gln256, 277 to 279, and Thr299 each bind GTP; that span reads EGR. Asp311 (proton acceptor; for GTP cyclohydrolase activity) is an active-site residue. Arg313 serves as the catalytic Nucleophile; for GTP cyclohydrolase activity. Thr334 and Lys339 together coordinate GTP.

This sequence in the N-terminal section; belongs to the DHBP synthase family. In the C-terminal section; belongs to the GTP cyclohydrolase II family. Mg(2+) serves as cofactor. Requires Mn(2+) as cofactor. Zn(2+) is required as a cofactor.

It carries out the reaction D-ribulose 5-phosphate = (2S)-2-hydroxy-3-oxobutyl phosphate + formate + H(+). The enzyme catalyses GTP + 4 H2O = 2,5-diamino-6-hydroxy-4-(5-phosphoribosylamino)-pyrimidine + formate + 2 phosphate + 3 H(+). Its pathway is cofactor biosynthesis; riboflavin biosynthesis; 2-hydroxy-3-oxobutyl phosphate from D-ribulose 5-phosphate: step 1/1. It participates in cofactor biosynthesis; riboflavin biosynthesis; 5-amino-6-(D-ribitylamino)uracil from GTP: step 1/4. Its function is as follows. Catalyzes the conversion of D-ribulose 5-phosphate to formate and 3,4-dihydroxy-2-butanone 4-phosphate. Catalyzes the conversion of GTP to 2,5-diamino-6-ribosylamino-4(3H)-pyrimidinone 5'-phosphate (DARP), formate and pyrophosphate. The protein is Riboflavin biosynthesis protein RibBA of Thermotoga maritima (strain ATCC 43589 / DSM 3109 / JCM 10099 / NBRC 100826 / MSB8).